Reading from the N-terminus, the 90-residue chain is Probable Fe(2+)-trafficking protein (90 aa).

This sequence belongs to the Fe(2+)-trafficking protein family.

In terms of biological role, could be a mediator in iron transactions between iron acquisition and iron-requiring processes, such as synthesis and/or repair of Fe-S clusters in biosynthetic enzymes. The sequence is that of Probable Fe(2+)-trafficking protein from Pseudomonas fluorescens (strain SBW25).